The following is a 377-amino-acid chain: Unsaturated glucuronyl hydrolase (377 aa).

Aspartate 88 functions as the Nucleophile in the catalytic mechanism. The active-site Proton donor is the aspartate 149.

The protein belongs to the glycosyl hydrolase 88 family. As to quaternary structure, monomer.

It localises to the cytoplasm. The enzyme catalyses beta-D-Delta(4)-GlcA-(1-&gt;4)-beta-D-Glc-(1-&gt;4)-alpha-L-Rha-(1-&gt;3)-D-Glc + H2O = beta-D-Glc-(1-&gt;4)-alpha-L-Rha-(1-&gt;3)-D-Glc + 5-dehydro-4-deoxy-D-glucuronate. Its activity is regulated as follows. Partially inhibited by divalent metal ions such as calcium, copper, iron and mercury. Catalyzes the hydrolysis of oligosaccharides with unsaturated glucuronyl residues at the non-reducing terminal, to a sugar or an amino sugar, and an unsaturated D-glucuronic acid (GlcA), which is nonenzymatically converted immediately to alpha-keto acid. The protein is Unsaturated glucuronyl hydrolase (ugl) of Bacillus sp. (strain GL1).